The primary structure comprises 510 residues: Glycerol kinase (510 aa).

Thr-14 lines the ADP pocket. ATP-binding residues include Thr-14 and Thr-15. Thr-14 contributes to the sn-glycerol 3-phosphate binding site. Residue Arg-18 coordinates ADP. Residues Arg-84, Glu-85, Tyr-136, and Asp-256 each contribute to the sn-glycerol 3-phosphate site. Arg-84, Glu-85, Tyr-136, Asp-256, and Gln-257 together coordinate glycerol. 4 residues coordinate ADP: Thr-278, Gly-322, Gly-422, and Asn-426. ATP-binding residues include Thr-278, Gly-322, and Gly-422.

The protein belongs to the FGGY kinase family.

The enzyme catalyses glycerol + ATP = sn-glycerol 3-phosphate + ADP + H(+). Its pathway is polyol metabolism; glycerol degradation via glycerol kinase pathway; sn-glycerol 3-phosphate from glycerol: step 1/1. Key enzyme in the regulation of glycerol uptake and metabolism. Catalyzes the phosphorylation of glycerol to yield sn-glycerol 3-phosphate. It also catalyzes the phosphorylation of dihydroxyacetone (DHA). Involved, together with the DHA kinase DhaKLM, in the metabolism of DHA. The protein is Glycerol kinase of Haloferax volcanii (strain ATCC 29605 / DSM 3757 / JCM 8879 / NBRC 14742 / NCIMB 2012 / VKM B-1768 / DS2) (Halobacterium volcanii).